Reading from the N-terminus, the 440-residue chain is Chromosome partition protein MukF (440 aa).

Positions 208 to 236 (LSETSGTLRELQDTLEAAGDKLQANLLRI) are leucine-zipper.

Belongs to the MukF family. Interacts, and probably forms a ternary complex, with MukE and MukB via its C-terminal region. The complex formation is stimulated by calcium or magnesium. It is required for an interaction between MukE and MukB.

It localises to the cytoplasm. It is found in the nucleoid. Involved in chromosome condensation, segregation and cell cycle progression. May participate in facilitating chromosome segregation by condensation DNA from both sides of a centrally located replisome during cell division. Not required for mini-F plasmid partitioning. Probably acts via its interaction with MukB and MukE. Overexpression results in anucleate cells. It has a calcium binding activity. The sequence is that of Chromosome partition protein MukF from Escherichia coli O157:H7.